Reading from the N-terminus, the 160-residue chain is Bursicon (160 aa).

A signal peptide spans 1–20 (MSVLNTFLVIVALILCYVND). The CTCK domain occupies 38 to 131 (CQECQMTAVI…PLQCMCRPCG (94 aa)). 5 cysteine pairs are disulfide-bonded: Cys41–Cys90, Cys55–Cys104, Cys65–Cys125, Cys69–Cys127, and Cys87–Cys130.

In terms of assembly, heterodimer of burs and pburs.

The protein resides in the secreted. In terms of biological role, final heterodimeric neurohormone released at the end of the molting cycle, involved in the sclerotization (tanning) of the insect cuticle, melanization and wing spreading. The chain is Bursicon from Bombyx mori (Silk moth).